The sequence spans 294 residues: Shikimate dehydrogenase (NADP(+)) (294 aa).

Shikimate contacts are provided by residues Ser22–Ser24 and Ser69. The Proton acceptor role is filled by Lys73. Shikimate is bound by residues Asn94 and Asp111. Residues Gly135–Ala139 and Leu236 each bind NADP(+). Tyr238 provides a ligand contact to shikimate. Gly260 serves as a coordination point for NADP(+).

This sequence belongs to the shikimate dehydrogenase family. In terms of assembly, homodimer.

The enzyme catalyses shikimate + NADP(+) = 3-dehydroshikimate + NADPH + H(+). The protein operates within metabolic intermediate biosynthesis; chorismate biosynthesis; chorismate from D-erythrose 4-phosphate and phosphoenolpyruvate: step 4/7. Involved in the biosynthesis of the chorismate, which leads to the biosynthesis of aromatic amino acids. Catalyzes the reversible NADPH linked reduction of 3-dehydroshikimate (DHSA) to yield shikimate (SA). The chain is Shikimate dehydrogenase (NADP(+)) from Streptococcus equi subsp. zooepidemicus (strain H70).